Here is a 121-residue protein sequence, read N- to C-terminus: MIIKPSRNELRKKRHLRVRKKVFGTPERPRLNVYKSLKHIYAQIIDDTKGHTLVSASTLDPELRDVAKGANKQSAKLVGELIAKRALEKGIKDVVFDRGGYLYHGVVKELADAARQAGLNF.

The protein belongs to the universal ribosomal protein uL18 family. Part of the 50S ribosomal subunit; part of the 5S rRNA/L5/L18/L25 subcomplex. Contacts the 5S and 23S rRNAs.

Functionally, this is one of the proteins that bind and probably mediate the attachment of the 5S RNA into the large ribosomal subunit, where it forms part of the central protuberance. In Caldanaerobacter subterraneus subsp. tengcongensis (strain DSM 15242 / JCM 11007 / NBRC 100824 / MB4) (Thermoanaerobacter tengcongensis), this protein is Large ribosomal subunit protein uL18.